We begin with the raw amino-acid sequence, 312 residues long: tRNA dimethylallyltransferase (312 aa).

Residue 13–20 participates in ATP binding; sequence GPTAVGKT. Residue 15-20 coordinates substrate; the sequence is TAVGKT. Interaction with substrate tRNA regions lie at residues 38 to 41 and 163 to 167; these read DSVQ and QRVVR.

The protein belongs to the IPP transferase family. Monomer. The cofactor is Mg(2+).

The enzyme catalyses adenosine(37) in tRNA + dimethylallyl diphosphate = N(6)-dimethylallyladenosine(37) in tRNA + diphosphate. Functionally, catalyzes the transfer of a dimethylallyl group onto the adenine at position 37 in tRNAs that read codons beginning with uridine, leading to the formation of N6-(dimethylallyl)adenosine (i(6)A). This Exiguobacterium sibiricum (strain DSM 17290 / CCUG 55495 / CIP 109462 / JCM 13490 / 255-15) protein is tRNA dimethylallyltransferase.